Consider the following 400-residue polypeptide: MMGKSGSQQLLMDEKIYVAVGSDLGNKSTLVWAIQNTGGKEFCIVHVHQPLYRKEKEKTQKILDKYLQKCRQMQVCAEMIHIKMESVEKGIIQLISERNVKKLVMGAASDTRYSMRMADLLSTKAIYIRQEAPATCCIWFTCKGYLVYKRESIMGNTSLEYASTSSGQDSVRSRGSVIPSRQFTISRGNGNVYQLAVFEAEKSKKEASLEAFKHQEVVKEKNEAIKRGKEWESAYLEELKQRKETEMELKKVREKLEKMRYISENRITESYMLVQKLQDKYNLATKVLRKAKEERDLLIKGRDIAIIEVEELRKEVSRSDEHREAPQYFICPISLEVMKDPQLAADGFTYEAEAISTWLQGGHETSPMTNTKLHHTKLVPNLALRSAIQEWLHASSSFRK.

A coiled-coil region spans residues 229–298 (KEWESAYLEE…RKAKEERDLL (70 aa)). The U-box domain occupies 324 to 398 (EAPQYFICPI…QEWLHASSSF (75 aa)).

It carries out the reaction S-ubiquitinyl-[E2 ubiquitin-conjugating enzyme]-L-cysteine + [acceptor protein]-L-lysine = [E2 ubiquitin-conjugating enzyme]-L-cysteine + N(6)-ubiquitinyl-[acceptor protein]-L-lysine.. It participates in protein modification; protein ubiquitination. Its function is as follows. Functions as an E3 ubiquitin ligase. The protein is U-box domain-containing protein 37 (PUB37) of Arabidopsis thaliana (Mouse-ear cress).